The following is a 206-amino-acid chain: Triosephosphate isomerase (206 aa).

Residue His-76 is the Electrophile of the active site. Catalysis depends on Glu-146, which acts as the Proton acceptor.

Belongs to the triosephosphate isomerase family. As to quaternary structure, homodimer.

It catalyses the reaction D-glyceraldehyde 3-phosphate = dihydroxyacetone phosphate. It participates in carbohydrate biosynthesis; gluconeogenesis. The protein operates within carbohydrate degradation; glycolysis; D-glyceraldehyde 3-phosphate from glycerone phosphate: step 1/1. This chain is Triosephosphate isomerase (Tpi), found in Aedes togoi (Mosquito).